Here is a 206-residue protein sequence, read N- to C-terminus: Large ribosomal subunit protein uL4 (206 aa).

This sequence belongs to the universal ribosomal protein uL4 family. In terms of assembly, part of the 50S ribosomal subunit.

One of the primary rRNA binding proteins, this protein initially binds near the 5'-end of the 23S rRNA. It is important during the early stages of 50S assembly. It makes multiple contacts with different domains of the 23S rRNA in the assembled 50S subunit and ribosome. Its function is as follows. Forms part of the polypeptide exit tunnel. This chain is Large ribosomal subunit protein uL4, found in Nitratidesulfovibrio vulgaris (strain ATCC 29579 / DSM 644 / CCUG 34227 / NCIMB 8303 / VKM B-1760 / Hildenborough) (Desulfovibrio vulgaris).